The sequence spans 243 residues: Ubiquinone/menaquinone biosynthesis C-methyltransferase UbiE (243 aa).

S-adenosyl-L-methionine is bound by residues Thr-69, Asp-90, and 116–117 (DA).

It belongs to the class I-like SAM-binding methyltransferase superfamily. MenG/UbiE family.

It carries out the reaction a 2-demethylmenaquinol + S-adenosyl-L-methionine = a menaquinol + S-adenosyl-L-homocysteine + H(+). It catalyses the reaction a 2-methoxy-6-(all-trans-polyprenyl)benzene-1,4-diol + S-adenosyl-L-methionine = a 5-methoxy-2-methyl-3-(all-trans-polyprenyl)benzene-1,4-diol + S-adenosyl-L-homocysteine + H(+). The protein operates within quinol/quinone metabolism; menaquinone biosynthesis; menaquinol from 1,4-dihydroxy-2-naphthoate: step 2/2. It participates in cofactor biosynthesis; ubiquinone biosynthesis. Functionally, methyltransferase required for the conversion of demethylmenaquinol (DMKH2) to menaquinol (MKH2) and the conversion of 2-polyprenyl-6-methoxy-1,4-benzoquinol (DDMQH2) to 2-polyprenyl-3-methyl-6-methoxy-1,4-benzoquinol (DMQH2). The chain is Ubiquinone/menaquinone biosynthesis C-methyltransferase UbiE from Paraburkholderia phytofirmans (strain DSM 17436 / LMG 22146 / PsJN) (Burkholderia phytofirmans).